Consider the following 380-residue polypeptide: Cytochrome b (380 aa).

Helical transmembrane passes span 33–53, 77–98, 113–133, and 178–198; these read FGSLLGLCLIAQILTGLFLAM, WLIRNFHANGASFFFICLYLHV, WNIGVVLLLLVMMTAFVGYVL, and FFAFHFLFPFIIAAMVILHLL. Heme b contacts are provided by histidine 83 and histidine 97. Positions 182 and 196 each coordinate heme b. Histidine 201 contacts a ubiquinone. 4 helical membrane-spanning segments follow: residues 226 to 246, 288 to 308, 320 to 340, and 347 to 367; these read YKDLFGFVILLLALSVLALFS, LGGVLALLASILILMVVPLLH, LTQILFWTLVADVAILTWIGG, and FITVGQVASVLYFALFLIFIP.

The protein belongs to the cytochrome b family. The cytochrome bc1 complex contains 3 respiratory subunits (MT-CYB, CYC1 and UQCRFS1), 2 core proteins (UQCRC1 and UQCRC2) and probably 6 low-molecular weight proteins. Requires heme b as cofactor.

Its subcellular location is the mitochondrion inner membrane. In terms of biological role, component of the ubiquinol-cytochrome c reductase complex (complex III or cytochrome b-c1 complex) that is part of the mitochondrial respiratory chain. The b-c1 complex mediates electron transfer from ubiquinol to cytochrome c. Contributes to the generation of a proton gradient across the mitochondrial membrane that is then used for ATP synthesis. The polypeptide is Cytochrome b (mt-cyb) (Neocyttus rhomboidalis (Spiky oreo dory)).